The sequence spans 194 residues: MNDEDQDDKTKELPLGKETEANLFKSRSIFIYGPINQELAQKVCSQLVALAAASDEDIRIYVNSPGGHVESGDSIHDMIKFIKPKVWMIGTGWVASAGALIYVATPKERRLCLPNTRFLLHQPSGGTRGMASDIEIQAREIIKMNERLNRIMAAATGQPLDKIDKDTDRDYWLSAEEAKDYGLVSRIVTSQADI.

Serine 96 acts as the Nucleophile in catalysis. Histidine 121 is an active-site residue.

This sequence belongs to the peptidase S14 family. As to quaternary structure, fourteen ClpP subunits assemble into 2 heptameric rings which stack back to back to give a disk-like structure with a central cavity, resembling the structure of eukaryotic proteasomes.

The protein resides in the cytoplasm. The catalysed reaction is Hydrolysis of proteins to small peptides in the presence of ATP and magnesium. alpha-casein is the usual test substrate. In the absence of ATP, only oligopeptides shorter than five residues are hydrolyzed (such as succinyl-Leu-Tyr-|-NHMec, and Leu-Tyr-Leu-|-Tyr-Trp, in which cleavage of the -Tyr-|-Leu- and -Tyr-|-Trp bonds also occurs).. Its function is as follows. Cleaves peptides in various proteins in a process that requires ATP hydrolysis. Has a chymotrypsin-like activity. Plays a major role in the degradation of misfolded proteins. This chain is ATP-dependent Clp protease proteolytic subunit 3, found in Rhizobium johnstonii (strain DSM 114642 / LMG 32736 / 3841) (Rhizobium leguminosarum bv. viciae).